A 240-amino-acid chain; its full sequence is CD302 antigen (240 aa).

The C-type lectin domain maps to 40–160; it reads FQDSCYIFLQ…CEVSSVEGTL (121 aa). N-linked (GlcNAc...) asparagine glycosylation is present at Asn117. A disulfide bond links Cys136 and Cys151. The chain crosses the membrane as a helical span at residues 177–197; the sequence is ILISALVIASTVILTVLGAVI. At 198–240 the chain is on the cytoplasmic side; it reads WFLYKRNLDSGFTTVFSTAPQSPFNDDCVLVVAEENEYAVQFD.

Its subcellular location is the membrane. It localises to the cell projection. The protein resides in the filopodium. The protein localises to the cytoplasm. It is found in the cell cortex. Potential multifunctional C-type lectin receptor that may play roles in endocytosis and phagocytosis as well as in cell adhesion and migration. The protein is CD302 antigen of Sus scrofa (Pig).